Consider the following 595-residue polypeptide: Apolipoprotein N-acyltransferase 2 (595 aa).

5 helical membrane-spanning segments follow: residues 30-50 (FLAF…FGFF), 63-83 (LFFH…HWII), 95-115 (VVAI…FPIF), 167-187 (AEIT…YTLF), and 210-230 (FITL…FLFK). The CN hydrolase domain maps to 241–555 (LNVLIVQPDA…AEALSETIDV (315 aa)). Catalysis depends on Glu-293, which acts as the Proton acceptor. The active site involves Lys-372. Cys-463 (nucleophile) is an active-site residue. Residues 569 to 589 (LIPWLMLFLTGIYYLNLLIGI) traverse the membrane as a helical segment.

This sequence belongs to the CN hydrolase family. Apolipoprotein N-acyltransferase subfamily.

The protein localises to the cell inner membrane. The enzyme catalyses N-terminal S-1,2-diacyl-sn-glyceryl-L-cysteinyl-[lipoprotein] + a glycerophospholipid = N-acyl-S-1,2-diacyl-sn-glyceryl-L-cysteinyl-[lipoprotein] + a 2-acyl-sn-glycero-3-phospholipid + H(+). The protein operates within protein modification; lipoprotein biosynthesis (N-acyl transfer). Its function is as follows. Catalyzes the phospholipid dependent N-acylation of the N-terminal cysteine of apolipoprotein, the last step in lipoprotein maturation. The protein is Apolipoprotein N-acyltransferase 2 of Leptospira interrogans serogroup Icterohaemorrhagiae serovar copenhageni (strain Fiocruz L1-130).